The following is a 784-amino-acid chain: MPHALWTVWVLGAVISLSKEGVPDQPSSLSCDPTGVCDGRSRSLNSIPSGLTAAVKSLDLSNNKIASVGNSDLWKCVNLKALRLGSNDINTIEEDSFSSLRSLEHLDLSNNHLSNLSSSWFRPLSSLKFLNLLGSTYKTLGETSLFSHLTNLRILKVGNIHFTEIQGKDFAGLTFLEELEIDATNLQRYEPKSFKSIQNISHLILRMKQPVLLPEIILDTLSSLEYLELRDTYLNTFHFAEVSDPETNTLIKKFTFRNVKITDESFDEIVKLLNYISGVSEAEFDECTLDGLGEFRTPDIDKIKVIGKLETLTIRRLRIPQFYLFRDLSSIYSLTERVKRITIENSKVFLVPCSLSRHLKSLEYLDLSDNLMVEEYLKNSACERAWPSLQTLILRQNHLTSLGKTGETLLTLKNLTKLDISKNSFHSMPETCQWPEKMKYLNLSSIRIDRLTQCIPQTLEVLDISNNNLNSFSLILPQVKELYISRNKLKTLPDASFLPMLLVMRISRKTINTFSKEQLDSFQKLKTLEAGGNNFICSCEFLSFTQEEQALDQILIDWPENYLCDSPSHVRGQRVQDTHLSVSECHRTALVSAVCCALFLSILLTGVLCHHFHGLWYMKMMWAWLQAKRKPRTAPQRDICYDAFVSYSERDSYWVENLMVQELEHFNPPFKLCLHKRDFIPGKWIIDNIIDSIEKSHKTIFVLSENFVKSEWCKYELDFSHFRLFDENNDAAILILLEPIDKKAIPQRFCKLRKIMNTKTYLEWPTDEAQQEGFWLNLRAAIKS.

Residues 1–20 (MPHALWTVWVLGAVISLSKE) form the signal peptide. Residues 21-587 (GVPDQPSSLS…THLSVSECHR (567 aa)) lie on the Extracellular side of the membrane. A disulfide bridge links cysteine 31 with cysteine 37. LRR repeat units follow at residues 54–77 (AVKSLDLSNNKIASVGNSDLWKCV), 78–101 (NLKALRLGSNDINTIEEDSFSSLR), 102–125 (SLEHLDLSNNHLSNLSSSWFRPLS), 126–150 (SLKFLNLLGSTYKTLGETSLFSHLT), 151–175 (NLRILKVGNIHFTEIQGKDFAGLTF), 176–199 (LEELEIDATNLQRYEPKSFKSIQN), 200–223 (ISHLILRMKQPVLLPEIILDTLSS), 224–250 (LEYLELRDTYLNTFHFAEVSDPETNTL), 251–278 (IKKFTFRNVKITDESFDEIVKLLNYISG), 279–308 (VSEAEFDECTLDGLGEFRTPDIDKIKVIGK), 309–337 (LETLTIRRLRIPQFYLFRDLSSIYSLTER), 338–361 (VKRITIENSKVFLVPCSLSRHLKS), 362–388 (LEYLDLSDNLMVEEYLKNSACERAWPS), 389–414 (LQTLILRQNHLTSLGKTGETLLTLKN), 415–437 (LTKLDISKNSFHSMPETCQWPEK), 438–457 (MKYLNLSSIRIDRLTQCIPQ), 458–478 (TLEVLDISNNNLNSFSLILPQ), 479–500 (VKELYISRNKLKTLPDASFLPM), and 501–524 (LLVMRISRKTINTFSKEQLDSFQK). Asparagine 115 carries an N-linked (GlcNAc...) asparagine glycan. The N-linked (GlcNAc...) asparagine glycan is linked to asparagine 199. An intrachain disulfide couples cysteine 353 to cysteine 382. Asparagine 414 is a glycosylation site (N-linked (GlcNAc...) asparagine). Cysteine 432 and cysteine 454 are disulfide-bonded. Asparagine 442 is a glycosylation site (N-linked (GlcNAc...) asparagine). The 55-residue stretch at 525–579 (LKTLEAGGNNFICSCEFLSFTQEEQALDQILIDWPENYLCDSPSHVRGQRVQDTH) folds into the LRRCT domain. The helical transmembrane segment at 588–608 (TALVSAVCCALFLSILLTGVL) threads the bilayer. At 609–784 (CHHFHGLWYM…WLNLRAAIKS (176 aa)) the chain is on the cytoplasmic side. Residues 639–782 (ICYDAFVSYS…GFWLNLRAAI (144 aa)) enclose the TIR domain. Residue lysine 754 forms a Glycyl lysine isopeptide (Lys-Gly) (interchain with G-Cter in ubiquitin) linkage. The ATG16L1-binding motif motif lies at 761–778 (YLEWPTDEAQQEGFWLNL).

Belongs to the Toll-like receptor family. As to quaternary structure, interacts with LY96, TLR1 and TLR6 (via extracellular domain). TLR2 seems to exist in heterodimers with either TLR1 or TLR6 before stimulation by the ligand. The heterodimers form bigger oligomers in response to their corresponding ligands as well as further heterotypic associations with other receptors such as CD14 and/or CD36. Binds MYD88 (via TIR domain). Interacts with TICAM1. Interacts with CNPY3. Interacts with ATG16L1. Interacts with PPP1R11. Interacts with TICAM2. Interacts with TIRAP. Post-translationally, ubiquitinated at Lys-754 by PPP1R11, leading to its degradation. Deubiquitinated by USP2. Glycosylation of Asn-442 is critical for secretion of the N-terminal ectodomain of TLR2.

Its subcellular location is the membrane. It localises to the cytoplasmic vesicle. The protein resides in the phagosome membrane. It is found in the membrane raft. Its function is as follows. Cooperates with LY96 to mediate the innate immune response to bacterial lipoproteins and other microbial cell wall components. Cooperates with TLR1 or TLR6 to mediate the innate immune response to bacterial lipoproteins or lipopeptides. Acts via MYD88 and TRAF6, leading to NF-kappa-B activation, cytokine secretion and the inflammatory response. May also promote apoptosis in response to lipoproteins. Forms activation clusters composed of several receptors depending on the ligand, these clusters trigger signaling from the cell surface and subsequently are targeted to the Golgi in a lipid-raft dependent pathway. Forms the cluster TLR2:TLR6:CD14:CD36 in response to diacylated lipopeptides and TLR2:TLR1:CD14 in response to triacylated lipopeptides. This is Toll-like receptor 2 (TLR2) from Equus caballus (Horse).